The sequence spans 82 residues: Small ribosomal subunit protein bS16 (82 aa).

The protein belongs to the bacterial ribosomal protein bS16 family.

The sequence is that of Small ribosomal subunit protein bS16 from Francisella tularensis subsp. holarctica (strain FTNF002-00 / FTA).